Reading from the N-terminus, the 564-residue chain is Mitochondrial distribution and morphology protein 34-1 (564 aa).

Residues 1 to 195 (MAFKFNWSPL…LPAIIHRLSL (195 aa)) enclose the SMP-LTD domain. Polar residues-rich tracts occupy residues 297 to 322 (PDQNDSSASVMSPISPPLSRTQSQTG) and 329 to 352 (DNASTSSAQSRTPTGPTQSFSSYG). 3 disordered regions span residues 297-408 (PDQN…VTSA), 414-433 (HEQPDDPVTPPLSPESDQSL), and 452-473 (DLSSEIVRDRAEPSEPRNPFNT). Residues 359-371 (RHSRAHARRRKKR) show a composition bias toward basic residues. A compositionally biased stretch (low complexity) spans 383-394 (SDSASVSVSDES). Residues 396–408 (YTESASAPSVTSA) are compositionally biased toward polar residues. Over residues 452-466 (DLSSEIVRDRAEPSE) the composition is skewed to basic and acidic residues.

Belongs to the MDM34 family. In terms of assembly, component of the ER-mitochondria encounter structure (ERMES) or MDM complex, composed of mmm1, mdm10, mdm12 and mdm34.

The protein localises to the mitochondrion outer membrane. Component of the ERMES/MDM complex, which serves as a molecular tether to connect the endoplasmic reticulum (ER) and mitochondria. Components of this complex are involved in the control of mitochondrial shape and protein biogenesis, and function in nonvesicular lipid trafficking between the ER and mitochondria. Mdm34 is required for the interaction of the ER-resident membrane protein mmm1 and the outer mitochondrial membrane-resident beta-barrel protein mdm10. The protein is Mitochondrial distribution and morphology protein 34-1 of Penicillium rubens (strain ATCC 28089 / DSM 1075 / NRRL 1951 / Wisconsin 54-1255) (Penicillium chrysogenum).